Consider the following 174-residue polypeptide: Bifunctional protein PyrR 2 (174 aa).

Substrate-binding positions include 39–40 (TR), 100–108 (DDVLFTGRT), and arginine 133. Positions 96-108 (VILVDDVLFTGRT) match the PRPP-binding motif.

The protein belongs to the purine/pyrimidine phosphoribosyltransferase family. PyrR subfamily. As to quaternary structure, homodimer and homohexamer; in equilibrium.

It carries out the reaction UMP + diphosphate = 5-phospho-alpha-D-ribose 1-diphosphate + uracil. Its function is as follows. Regulates transcriptional attenuation of the pyrimidine nucleotide (pyr) operon by binding in a uridine-dependent manner to specific sites on pyr mRNA. This disrupts an antiterminator hairpin in the RNA and favors formation of a downstream transcription terminator, leading to a reduced expression of downstream genes. In terms of biological role, also displays a weak uracil phosphoribosyltransferase activity which is not physiologically significant. In Lactiplantibacillus plantarum (strain ATCC BAA-793 / NCIMB 8826 / WCFS1) (Lactobacillus plantarum), this protein is Bifunctional protein PyrR 2 (pyrR2).